The primary structure comprises 210 residues: Somatotropin (210 aa).

Residues 1 to 22 form the signal peptide; it reads MGQVFLLMPVLLVSCFLSQGAA. Residue His-38 participates in Zn(2+) binding. The cysteines at positions 71 and 183 are disulfide-linked. Glu-192 is a binding site for Zn(2+). A disulfide bridge connects residues Cys-200 and Cys-208.

It belongs to the somatotropin/prolactin family.

Its subcellular location is the secreted. Growth hormone plays an important role in growth control and is involved in the regulation of several anabolic processes. Implicated as an osmoregulatory substance important for seawater adaptation. The protein is Somatotropin (gh) of Salmo salar (Atlantic salmon).